A 217-amino-acid polypeptide reads, in one-letter code: Chorionic somatomammotropin hormone 2 (217 aa).

An N-terminal signal peptide occupies residues 1–26 (MAAGSRTSLLLAFALLCLPWLQEAGA). His-44 contributes to the Zn(2+) binding site. A disulfide bridge connects residues Cys-79 and Cys-191. Position 200 (Glu-200) interacts with Zn(2+). Residues Cys-208 and Cys-215 are joined by a disulfide bond.

Belongs to the somatotropin/prolactin family. As to quaternary structure, can be found in a monomeric as well as dimeric form.

It localises to the secreted. Its function is as follows. Produced only during pregnancy and is involved in stimulating lactation, fetal growth and metabolism. Does not interact with GHR but only activates PRLR through zinc-induced dimerization. This is Chorionic somatomammotropin hormone 2 (CSH2) from Homo sapiens (Human).